Reading from the N-terminus, the 135-residue chain is Small ribosomal subunit protein uS11 (135 aa).

Polar residues predominate over residues 1 to 10 (MPPKSRTATA). Disordered regions lie at residues 1 to 27 (MPPKSRTATASRKPRRKEKKNVAHGHA) and 114 to 135 (GAIQDVTPSPHNGCRPPKRRRV). A compositionally biased stretch (basic residues) spans 12–27 (RKPRRKEKKNVAHGHA).

The protein belongs to the universal ribosomal protein uS11 family. In terms of assembly, part of the 30S ribosomal subunit. Interacts with proteins S7 and S18. Binds to IF-3.

Functionally, located on the platform of the 30S subunit, it bridges several disparate RNA helices of the 16S rRNA. Forms part of the Shine-Dalgarno cleft in the 70S ribosome. This is Small ribosomal subunit protein uS11 from Kineococcus radiotolerans (strain ATCC BAA-149 / DSM 14245 / SRS30216).